We begin with the raw amino-acid sequence, 348 residues long: Cyclic AMP-dependent transcription factor ATF-4 (348 aa).

Lysine 53 participates in a covalent cross-link: Glycyl lysine isopeptide (Lys-Gly) (interchain with G-Cter in SUMO2). Disordered stretches follow at residues 151-174 (QGAP…TPDH) and 187-265 (PEGD…GEKM). Phosphoserine is present on residues serine 211, serine 215, serine 220, serine 227, and serine 231. Positions 211–220 (SDNDSGICMS) match the BetaTrCP degron motif motif. Polar residues predominate over residues 221–241 (PDSSLGSPQDSPSTSRGSPNK). Residue proline 232 is modified to 4-hydroxyproline. Phosphoserine is present on residues serine 242 and serine 245. Positions 242-253 (SLLSPGALSGSS) are enriched in low complexity. Residues lysine 256, lysine 264, and lysine 269 each participate in a glycyl lysine isopeptide (Lys-Gly) (interchain with G-Cter in SUMO2) cross-link. One can recognise a bZIP domain in the interval 275-338 (LDKKLKKMEQ…QYLKDQIEEV (64 aa)). The tract at residues 277-297 (KKLKKMEQNKTAATRYRQKKR) is basic motif. Positions 302–338 (ALTGECKELEKKNEALKEKADSLAKEIQYLKDQIEEV) are interaction with GABBR1. The leucine-zipper stretch occupies residues 303–331 (LTGECKELEKKNEALKEKADSLAKEIQYL). Lysine 308 bears the N6-acetyllysine mark.

It belongs to the bZIP family. In terms of assembly, binds DNA as a homodimer and as a heterodimer. Heterodimer; heterodimerizes with CEBPB. Heterodimer; heterodimerizes with DDIT3/CHOP. Interacts with CEP290 (via an N-terminal region). Interacts with NEK6, DAPK2 (isoform 2) and ZIPK/DAPK3. Interacts (via its leucine zipper domain) with GABBR1 and GABBR2 (via their C-termini). Forms a heterodimer with TXLNG in osteoblasts. Interacts (via its DNA binding domain) with FOXO1 (C-terminal half); the interaction occurs in osteoblasts and regulates glucose homeostasis through suppression of beta-cell proliferation and a decrease in insulin production. Interacts with SATB2; the interaction results in enhanced DNA binding and transactivation by these transcription factors. Interacts with ABRAXAS2. Interacts with TRIB3, inhibiting the transactivation activity of ATF4. Interacts with DISC1; which inhibits ATF4 transcription factor activity by disrupting ATF4 dimerization and DNA-binding. Interacts with EP300/p300; EP300/p300 stabilizes ATF4 and increases its transcriptional activity independently of its catalytic activity by preventing its ubiquitination. Post-translationally, ubiquitinated by SCF(BTRC) in response to mTORC1 signal, followed by proteasomal degradation and leading to down-regulate expression of SIRT4. Interaction with EP300/p300 inhibits ubiquitination by SCF(BTRC). Phosphorylation at Ser-242 by RPS6KA3/RSK2 in osteoblasts enhances transactivation activity and promotes osteoblast differentiation. Phosphorylated on the betaTrCP degron motif at Ser-215, followed by phosphorylation at Ser-220, Ser-227, Ser-231 and Ser-245, promoting interaction with BTRC and ubiquitination. Phosphorylation is promoted by mTORC1. Phosphorylation at Ser-211 by CK2 decreases its stability. Phosphorylated by NEK6. In terms of processing, hydroxylated by PHD3, leading to decreased protein stability.

It is found in the nucleus. The protein localises to the nucleus speckle. Its subcellular location is the cytoplasm. The protein resides in the cell membrane. It localises to the cytoskeleton. It is found in the microtubule organizing center. The protein localises to the centrosome. Functionally, transcription factor that binds the cAMP response element (CRE) (consensus: 5'-GTGACGT[AC][AG]-3') and displays two biological functions, as regulator of metabolic and redox processes under normal cellular conditions, and as master transcription factor during integrated stress response (ISR). Binds to asymmetric CRE's as a heterodimer and to palindromic CRE's as a homodimer. Core effector of the ISR, which is required for adaptation to various stress such as endoplasmic reticulum (ER) stress, amino acid starvation, mitochondrial stress or oxidative stress. During ISR, ATF4 translation is induced via an alternative ribosome translation re-initiation mechanism in response to EIF2S1/eIF-2-alpha phosphorylation, and stress-induced ATF4 acts as a master transcription factor of stress-responsive genes in order to promote cell recovery. Promotes the transcription of genes linked to amino acid sufficiency and resistance to oxidative stress to protect cells against metabolic consequences of ER oxidation. Activates the transcription of NLRP1, possibly in concert with other factors in response to ER stress. Activates the transcription of asparagine synthetase (ASNS) in response to amino acid deprivation or ER stress. However, when associated with DDIT3/CHOP, the transcriptional activation of the ASNS gene is inhibited in response to amino acid deprivation. Together with DDIT3/CHOP, mediates programmed cell death by promoting the expression of genes involved in cellular amino acid metabolic processes, mRNA translation and the terminal unfolded protein response (terminal UPR), a cellular response that elicits programmed cell death when ER stress is prolonged and unresolved. Activates the expression of COX7A2L/SCAF1 downstream of the EIF2AK3/PERK-mediated unfolded protein response, thereby promoting formation of respiratory chain supercomplexes and increasing mitochondrial oxidative phosphorylation. Together with DDIT3/CHOP, activates the transcription of the IRS-regulator TRIB3 and promotes ER stress-induced neuronal cell death by regulating the expression of BBC3/PUMA in response to ER stress. May cooperate with the UPR transcriptional regulator QRICH1 to regulate ER protein homeostasis which is critical for cell viability in response to ER stress. In the absence of stress, ATF4 translation is at low levels and it is required for normal metabolic processes such as embryonic lens formation, fetal liver hematopoiesis, bone development and synaptic plasticity. Acts as a regulator of osteoblast differentiation in response to phosphorylation by RPS6KA3/RSK2: phosphorylation in osteoblasts enhances transactivation activity and promotes expression of osteoblast-specific genes and post-transcriptionally regulates the synthesis of Type I collagen, the main constituent of the bone matrix. Cooperates with FOXO1 in osteoblasts to regulate glucose homeostasis through suppression of beta-cell production and decrease in insulin production. Activates transcription of SIRT4. Regulates the circadian expression of the core clock component PER2 and the serotonin transporter SLC6A4. Binds in a circadian time-dependent manner to the cAMP response elements (CRE) in the SLC6A4 and PER2 promoters and periodically activates the transcription of these genes. Mainly acts as a transcriptional activator in cellular stress adaptation, but it can also act as a transcriptional repressor: acts as a regulator of synaptic plasticity by repressing transcription, thereby inhibiting induction and maintenance of long-term memory. Regulates synaptic functions via interaction with DISC1 in neurons, which inhibits ATF4 transcription factor activity by disrupting ATF4 dimerization and DNA-binding. In Bos taurus (Bovine), this protein is Cyclic AMP-dependent transcription factor ATF-4.